We begin with the raw amino-acid sequence, 276 residues long: Formamidopyrimidine-DNA glycosylase (276 aa).

The active-site Schiff-base intermediate with DNA is Pro-2. Glu-3 serves as the catalytic Proton donor. The active-site Proton donor; for beta-elimination activity is Lys-58. Positions 92, 111, and 154 each coordinate DNA. The segment at 239–273 (HAYQRTGDPCERCGTPIQRIVVGQRGTHFCPKCQV) adopts an FPG-type zinc-finger fold. Residue Arg-263 is the Proton donor; for delta-elimination activity of the active site.

This sequence belongs to the FPG family. As to quaternary structure, monomer. Zn(2+) is required as a cofactor.

It carries out the reaction Hydrolysis of DNA containing ring-opened 7-methylguanine residues, releasing 2,6-diamino-4-hydroxy-5-(N-methyl)formamidopyrimidine.. The enzyme catalyses 2'-deoxyribonucleotide-(2'-deoxyribose 5'-phosphate)-2'-deoxyribonucleotide-DNA = a 3'-end 2'-deoxyribonucleotide-(2,3-dehydro-2,3-deoxyribose 5'-phosphate)-DNA + a 5'-end 5'-phospho-2'-deoxyribonucleoside-DNA + H(+). In terms of biological role, involved in base excision repair of DNA damaged by oxidation or by mutagenic agents. Acts as a DNA glycosylase that recognizes and removes damaged bases. Has a preference for oxidized purines, such as 7,8-dihydro-8-oxoguanine (8-oxoG). Has AP (apurinic/apyrimidinic) lyase activity and introduces nicks in the DNA strand. Cleaves the DNA backbone by beta-delta elimination to generate a single-strand break at the site of the removed base with both 3'- and 5'-phosphates. The protein is Formamidopyrimidine-DNA glycosylase of Ligilactobacillus salivarius (strain UCC118) (Lactobacillus salivarius).